We begin with the raw amino-acid sequence, 609 residues long: Proteasome-associated ATPase (609 aa).

The tract at residues 1-27 is disordered; sequence MGSSERSEAFGTPRESDMSSGDEAELE. A coiled-coil region spans residues 17 to 96; sequence DMSSGDEAEL…LREEVDRLGQ (80 aa). 296 to 301 lines the ATP pocket; it reads GCGKTL. Residues 608-609 form a docks into pockets in the proteasome alpha-ring region; the sequence is YL.

It belongs to the AAA ATPase family. In terms of assembly, homohexamer. Assembles into a hexameric ring structure that caps the 20S proteasome core. Strongly interacts with the prokaryotic ubiquitin-like protein Pup through a hydrophobic interface; the interacting region of ARC lies in its N-terminal coiled-coil domain. There is one Pup binding site per ARC hexamer ring. Upon ATP-binding, the C-terminus of ARC interacts with the alpha-rings of the proteasome core, possibly by binding to the intersubunit pockets.

Its pathway is protein degradation; proteasomal Pup-dependent pathway. In terms of biological role, ATPase which is responsible for recognizing, binding, unfolding and translocation of pupylated proteins into the bacterial 20S proteasome core particle. May be essential for opening the gate of the 20S proteasome via an interaction with its C-terminus, thereby allowing substrate entry and access to the site of proteolysis. Thus, the C-termini of the proteasomal ATPase may function like a 'key in a lock' to induce gate opening and therefore regulate proteolysis. In Mycobacterium avium (strain 104), this protein is Proteasome-associated ATPase.